The primary structure comprises 451 residues: Plasmepsin III (451 aa).

At Met1–Leu37 the chain is on the cytoplasmic side. Residues Met1–Gly123 constitute a propeptide that is removed on maturation. The chain crosses the membrane as a helical; Signal-anchor for type II membrane protein span at residues Phe38–Phe58. Topologically, residues Glu59–Leu451 are lumenal. Residues Ser139–Ala446 form the Peptidase A1 domain. Intrachain disulfides connect Cys170-Cys175 and Cys372-Cys408.

It belongs to the peptidase A1 family. As to quaternary structure, probable homodimer; in the zymogen form. Monomer; in the active form. Acidification disrupts homodimerization. Component of the hemozoin formation complex (HFC) composed of falcipains FP2A and/or FP2B, plasmepsins PMII, PMIII/HAP and PMIV, heme detoxifying protein HDP and falcilysin FLN. The HFC complex is involved in hemoglobin degradation and detoxification of heme in the food vacuole during the asexual blood stage. Post-translationally, proteolytically cleaved into the soluble active mature form by cysteine proteases in the digestive vacuole of trophozoites. Proteolysis requires an acidic environment. Transprocessing may serve as an alternate activation system.

It localises to the membrane. The protein localises to the vacuole lumen. The enzyme catalyses Hydrolysis of the bonds linking certain hydrophobic residues in hemoglobin or globin. Also cleaves small molecules substrates such as Ala-Leu-Glu-Arg-Thr-Phe-|-Phe(NO2)-Ser-Phe-Pro-Thr.. With respect to regulation, dimerization causes loss of catalytic activity. Inhibited by pepstatin A. Inhibited by Zn(2+). Its function is as follows. During the asexual blood stage, catalyzes the cleavage of denatured host hemoglobin (Hb) or globins. Digestion of host Hb is an essential step which provides the parasite with amino acids for protein synthesis, and regulates osmolarity. The protein is Plasmepsin III of Plasmodium falciparum (isolate 3D7).